Here is a 645-residue protein sequence, read N- to C-terminus: Zinc finger protein 235 (645 aa).

A KRAB domain is found at 8–86; the sequence is VTFRDVAVVF…TSHDVNKLAR (79 aa). 2 disordered regions span residues 112-144 and 255-280; these read GAEQPSQAPEDDGCLENLPSNHSSSSDNQEFLS and KKSPVHSTHKDTRHSPSVPIQPSVHP. Positions 129–144 are enriched in polar residues; it reads LPSNHSSSSDNQEFLS. 13 consecutive C2H2-type zinc fingers follow at residues 285–307, 313–335, 341–363, 369–391, 397–419, 425–447, 453–475, 481–503, 509–531, 537–559, 565–587, 593–615, and 621–643; these read YWCHECGKGFRQSSALQTHQRVH, YRCDSCGKGFSRSSDLNIHRRVH, YKCEVCGKGFTQWAHLQAHERIH, YKCGDCGKRFSCSSNLHTHQRVH, YECNECGKRFSLSGNLDIHQRVH, YKCEECGKGFSSASSFQSHQRVH, FHCSVCGKNFSRSSHFLDHQRIH, YRCEVCGKRFPWSLSLHSHQSVH, YKCGECGKGFSHASSLQAHHSVH, FKCNVCQKQFSKTSNLQAHQRVH, YKCDTCGKAFSQKSSLQVHQRIH, FKCEECGKEFRWSVGLSSHQRVH, and YTCQQCGKGFSQASYFHMHQRVH.

The protein belongs to the krueppel C2H2-type zinc-finger protein family.

It localises to the nucleus. Its function is as follows. May be involved in transcriptional regulation. The protein is Zinc finger protein 235 (Znf235) of Mus musculus (Mouse).